Here is a 142-residue protein sequence, read N- to C-terminus: Small ribosomal subunit protein bS16 (142 aa).

Residues 101 to 142 (RPSFDALGGDDAGKGEAITQKKKAEKKDEAAAESSSSESTEA) form a disordered region. The span at 132-142 (AESSSSESTEA) shows a compositional bias: low complexity.

The protein belongs to the bacterial ribosomal protein bS16 family.

This Streptomyces avermitilis (strain ATCC 31267 / DSM 46492 / JCM 5070 / NBRC 14893 / NCIMB 12804 / NRRL 8165 / MA-4680) protein is Small ribosomal subunit protein bS16.